Reading from the N-terminus, the 418-residue chain is Serpin A3-8 (418 aa).

A signal peptide spans 1–25; sequence MRAERMSPLLALGLLVSGLCSRVHC. N-linked (GlcNAc...) asparagine glycosylation is found at asparagine 103, asparagine 183, asparagine 233, and asparagine 268.

It belongs to the serpin family. Homodimer.

The protein localises to the cytoplasmic vesicle. It is found in the secretory vesicle. It localises to the chromaffin granule. Its subcellular location is the secreted. Functionally, serine protease inhibitor. The polypeptide is Serpin A3-8 (Bos taurus (Bovine)).